The primary structure comprises 548 residues: MVYTSTYRHTIVVDLLEYLGIVSNLETLQSAREDETRKPENTDKKECKPDYDIECGPNRSCSESSTDSDSSGSQIEKNDPFRVDWNGPSDPENPQNWPLLKKSLVVFQIMLLTCVTYMGSSIYTPGQEYIQEEFHVGHVVATLNLSLYVLGYGLGPIIFSPLSETARYGRLNLYMVTLFFFMIFQVGCATVHNIGGLIVMRFISGILCSPSLATGGGTVADIISPEMVPLVLGMWSAGAVAAPVLAPLLGAAMVDAKNWRFIFWLLMWLSAATFILLAFFFPETQHHNILYRRALKLRKETGDDRYYTEQDKLDREVDARTFLINTLYRPLKMIIKEPAILAFDLYIAVAYGCFYLFFEAFPIVFVGIYHFSLVEVGLAYMGFCVGCVLAYGLFGILNMRIIVPRFRNGTFTPEAFLIVAMCVCWCLPLSLFLFGWTARVHWILPVISEVFFVLAVFNIFQATFAYLATCYPKYVASVFAGNGFCRASFACAFPLFGRAMYDNLATKNYPVAWGSSLVGFLTLGLAIIPFILYKYGPSLRTRSSYTEE.

The interval 30 to 94 is disordered; it reads SAREDETRKP…WNGPSDPENP (65 aa). Residues 31–51 show a composition bias toward basic and acidic residues; the sequence is AREDETRKPENTDKKECKPDY. Over residues 60-73 the composition is skewed to low complexity; that stretch reads SCSESSTDSDSSGS. 12 consecutive transmembrane segments (helical) span residues 104-124, 139-159, 179-199, 203-223, 230-250, 261-281, 347-367, 376-396, 416-436, 440-460, 476-496, and 511-531; these read LVVF…SIYT, VVAT…PIIF, FFFM…GLIV, ISGI…ADII, LVLG…PLLG, FIFW…AFFF, IAVA…VFVG, VGLA…LFGI, FLIV…LFGW, VHWI…FNIF, ASVF…FPLF, and VAWG…IPFI.

The protein belongs to the major facilitator superfamily.

Its subcellular location is the membrane. Functionally, probable efflux transporter. Confers resistance to the azole derivative fluconazole (FCZ). The chain is Fluconazole resistance protein 1 (FLR1) from Saccharomyces cerevisiae (strain ATCC 204508 / S288c) (Baker's yeast).